The following is a 30-amino-acid chain: Uperin-6.1 (30 aa).

As to expression, expressed by the skin dorsal glands.

It localises to the secreted. The protein is Uperin-6.1 of Uperoleia inundata (Floodplain toadlet).